The chain runs to 83 residues: Bublin coiled-coil protein (83 aa).

Residues 1–25 (MSGPNGDLGMPVDAGTEGENDSFGE) form a disordered region. Residues 25-74 (EAEYAAINSMLDQINSCLDHLEEKNDHLHARLQELLESNRQTRLEFQQQL) adopt a coiled-coil conformation. A Phosphoserine modification is found at serine 82.

The protein belongs to the UPF0184 (EST00098) family.

It localises to the cell junction. The protein localises to the cytoplasm. It is found in the cytoskeleton. Its function is as follows. Essential for intermediate filament organization in intestinal cells, interacts with intermediate filament and regulates intestinal lumen morphology. The sequence is that of Bublin coiled-coil protein from Mus musculus (Mouse).